Here is a 340-residue protein sequence, read N- to C-terminus: Heat-inducible transcription repressor HrcA (340 aa).

It belongs to the HrcA family.

Negative regulator of class I heat shock genes (grpE-dnaK-dnaJ and groELS operons). Prevents heat-shock induction of these operons. The protein is Heat-inducible transcription repressor HrcA of Mycoplasmopsis synoviae (strain 53) (Mycoplasma synoviae).